The following is an 873-amino-acid chain: MIKKFDKKDEESGSGSNPFQNLEKSAVLQEARIFNETPINPRRCLHILTKIIYLLNQGEHFGTTEATEAFFAMTRLFQSNDQTLRRMCYLTIKEMANISEDVIIVTSSLTKDMTGKEDVYRGPAIRALCRITDTTMLQAIERYMKQAIVDKVPSVSSSALVSSLHMVKMSYDVVKRWVNEAQEAASSDNIMVQYHALGLLYHLRKNDRLAVTKMLNKFTKSGLKSPFAYCMLIRIASKLLDETEAGHDSPLFDFIESCLRNKNEMVVYEAASAIVHMPNCTARELAPAVSVLQLFCSSPKAALRYAAVRTLNKVAMKHPSAVTACNLDLENLITDSNRSIATLAITTLLKTGSESSVDRLMKQISSFVSEISDEFKVVVVQAISALCQKYPRKHSAMMNFLSNMLRDDGGFEYKRAIVDCIISIIEENPESKETGLAHLCEFIEDCEHTVLATKILHLLGKEGPRTPQPSKYIRFIFNRVVLESEAVRAAAVSALAKFGAQNDDLLPSVLVLMQRCMMDSDDEVRDRATFYMNVLQQKQKALNAAYIFNGLSVSIPGLEKSLHQYTLEPSEKPFDMKSVPLATTPITEQKTEIAPAATSKLPEKLAPSRQDIYQEQLAAIPEFQGLGPLFKSSDPVQLTEAETEYVVRCIKHTFARHMVFQFDCTNTLNDQLLQKVLVQMEPSEAYEVIHYIPAPSLPYSQPGSCYSLVRLPDDDPTAVSCTFSCTMKYLVRDCDPNTGEPDDDGYDDEYVLEDLEVTVPDHIQKVLKPNFGAAWEEVGDEFEKEETFALASVRTLDEAVGNIISFLGMQPCERSDKVPENKNSHVLFLAGVFRGGHDVLVRARLALADGVTMQVTVRSSEETVVDVILASVG.

The segment covering 1–11 (MIKKFDKKDEE) has biased composition (basic and acidic residues). The segment at 1 to 21 (MIKKFDKKDEESGSGSNPFQN) is disordered. 6 HEAT repeats span residues 64 to 101 (TEAT…ISED), 283 to 320 (RELA…KHPS), 321 to 355 (AVTA…GSES), 356 to 392 (SVDR…KYPR), 394 to 430 (HSAM…ENPE), and 467 to 504 (PQPS…QNDD).

Belongs to the COPG family. As to quaternary structure, oligomeric complex.

It localises to the cytoplasm. The protein resides in the golgi apparatus membrane. Its subcellular location is the cytoplasmic vesicle. It is found in the COPI-coated vesicle membrane. Functionally, the coatomer is a cytosolic protein complex that binds to dilysine motifs and reversibly associates with Golgi non-clathrin-coated vesicles, which further mediate biosynthetic protein transport from the ER, via the Golgi up to the trans Golgi network. Coatomer complex is required for budding from Golgi membranes, and is essential for the retrograde Golgi-to-ER transport of dilysine-tagged proteins. This chain is Coatomer subunit gamma-2 (copg2), found in Takifugu rubripes (Japanese pufferfish).